The sequence spans 469 residues: 3-isopropylmalate dehydratase large subunit (469 aa).

Positions 349, 410, and 413 each coordinate [4Fe-4S] cluster.

The protein belongs to the aconitase/IPM isomerase family. LeuC type 1 subfamily. As to quaternary structure, heterodimer of LeuC and LeuD. It depends on [4Fe-4S] cluster as a cofactor.

The enzyme catalyses (2R,3S)-3-isopropylmalate = (2S)-2-isopropylmalate. It functions in the pathway amino-acid biosynthesis; L-leucine biosynthesis; L-leucine from 3-methyl-2-oxobutanoate: step 2/4. Functionally, catalyzes the isomerization between 2-isopropylmalate and 3-isopropylmalate, via the formation of 2-isopropylmaleate. In Neisseria meningitidis serogroup C / serotype 2a (strain ATCC 700532 / DSM 15464 / FAM18), this protein is 3-isopropylmalate dehydratase large subunit.